Consider the following 205-residue polypeptide: Helix-loop-helix protein 4 (205 aa).

The segment at Met-3–Val-16 is basic motif. A bHLH domain is found at Met-3–Leu-56. The segment at His-17–Leu-56 is helix-loop-helix motif.

As to expression, expressed in the ADL sensory neurons.

Its subcellular location is the nucleus. Its function is as follows. Acts as a transcriptional regulator. May mediate transcriptional activation by binding to the E-box motif 5'-CANNTG-3'. Required for the correct morphology, terminal identity and function of the ADL sensory neurons by controlling the expression of the ADL-specific gene repertoire, including chemoreceptor encoding genes, ion channel encoding genes, neuropeptides and the neurotransmitter eat-4. Regulates the expression of the srh-234 chemoreceptor encoding gene in the ADL neurons under feeding conditions. Plays a role in the chemorepulsive response toward ascaroside pheromones mediated by the ADL sensory neurons. The polypeptide is Helix-loop-helix protein 4 (hlh-4) (Caenorhabditis elegans).